Consider the following 66-residue polypeptide: Phylloseptin-S2 (66 aa).

A signal peptide spans 1-22 (MAFLKKSLFLVLFLGLVSLSIC). Positions 23 to 46 (EEEKRETEEEEHDQEEDDKSEEKR) are excised as a propeptide. Positions 25–44 (EKRETEEEEHDQEEDDKSEE) are disordered. Residues 30-41 (EEEEHDQEEDDK) show a composition bias toward acidic residues. Position 65 is a phenylalanine amide (phenylalanine 65).

In terms of tissue distribution, expressed by the skin glands.

It is found in the secreted. The protein resides in the target cell membrane. In terms of biological role, antimicrobial peptide with high activity against Gram-positive bacteria, moderate activity against Gram-negative bacteria, and moderate activity against fungi. Acts by causing bacterial membrane disruption inducing leakage of the intracellular content followed by cell death. It adopts an alpha-helical amphipathic structure in membrane environments. Also shows highly potent antiparasitic activity against Leishmania species. Shows moderate hemolytic activity on human erythrocytes (LC(50)=25 uM). Is also active on human monocytes (IC(50)=22.5 uM). This is Phylloseptin-S2 from Phyllomedusa sauvagei (Sauvage's leaf frog).